A 230-amino-acid polypeptide reads, in one-letter code: Inactive 2-(S)-hydroxypropyl-CoM dehydrogenase 2 (230 aa).

This sequence belongs to the short-chain dehydrogenases/reductases (SDR) family.

This chain is Inactive 2-(S)-hydroxypropyl-CoM dehydrogenase 2, found in Xanthobacter autotrophicus (strain ATCC BAA-1158 / Py2).